Reading from the N-terminus, the 778-residue chain is DNA topoisomerase 1 (778 aa).

Residues 1 to 141 (MNSSDEEDIA…ETPEEDQGYK (141 aa)) form a disordered region. Residues 17–26 (KSSSITSAST) show a composition bias toward low complexity. Basic and acidic residues-rich tracts occupy residues 71 to 83 (VKTE…EPKS) and 100 to 121 (EKTT…ESKT). Positions 122–131 (QSDSQASVKS) are enriched in polar residues. Interaction with DNA regions lie at residues 367–368 (KY), 430–435 (RAGGEK), and 522–524 (TAK). In terms of domain architecture, Topo IB-type catalytic spans 374–778 (NSSVKGQSDF…IESADENWRF (405 aa)). Catalysis depends on Tyr-736, which acts as the O-(3'-phospho-DNA)-tyrosine intermediate.

Belongs to the type IB topoisomerase family.

It carries out the reaction ATP-independent breakage of single-stranded DNA, followed by passage and rejoining.. Functionally, releases the supercoiling and torsional tension of DNA introduced during the DNA replication and transcription by transiently cleaving and rejoining one strand of the DNA duplex. Introduces a single-strand break via transesterification at a target site in duplex DNA. The scissile phosphodiester is attacked by the catalytic tyrosine of the enzyme, resulting in the formation of a DNA-(3'-phosphotyrosyl)-enzyme intermediate and the expulsion of a 5'-OH DNA strand. The free DNA strand then rotates around the intact phosphodiester bond on the opposing strand, thus removing DNA supercoils. Finally, in the religation step, the DNA 5'-OH attacks the covalent intermediate to expel the active-site tyrosine and restore the DNA phosphodiester backbone. This is DNA topoisomerase 1 (TOP1) from Candida albicans (Yeast).